Reading from the N-terminus, the 331-residue chain is NADH-ubiquinone oxidoreductase chain 1 (331 aa).

The next 8 helical transmembrane spans lie at 8–28 (LLEILVVLVPILLSVAFMTVI), 75–95 (LFFLAPMVTLIFSLLGWGVIP), 107–127 (LGILYSLALSSIGVYGILFAG), 147–167 (ISYELIYSAAVLAVILLCGTF), 178–198 (SVWYIMPLLPIFILFFVSALA), 224–244 (GMIFVFFFLAEYGSIVLMSTF), 266–286 (FINLQSIALAVKAVLIMFLFV), and 308–328 (MLPVAIALLILVPSLLIAFDI).

This sequence belongs to the complex I subunit 1 family.

The protein resides in the mitochondrion inner membrane. It carries out the reaction a ubiquinone + NADH + 5 H(+)(in) = a ubiquinol + NAD(+) + 4 H(+)(out). Functionally, core subunit of the mitochondrial membrane respiratory chain NADH dehydrogenase (Complex I) that is believed to belong to the minimal assembly required for catalysis. Complex I functions in the transfer of electrons from NADH to the respiratory chain. The immediate electron acceptor for the enzyme is believed to be ubiquinone. In Mycosarcoma maydis (Corn smut fungus), this protein is NADH-ubiquinone oxidoreductase chain 1 (ND1).